A 359-amino-acid chain; its full sequence is Cyclin puc1 (359 aa).

This sequence belongs to the cyclin family.

Its function is as follows. Function in exit from the mitotic cycle. Contributes to negative regulation of the timing of sexual development in fission yeast, and functions at the transition between cycling and non-cycling cells. Interacts with protein kinase A. This chain is Cyclin puc1 (puc1), found in Schizosaccharomyces pombe (strain 972 / ATCC 24843) (Fission yeast).